Reading from the N-terminus, the 129-residue chain is MKTAQFYVLFFCWKAIWCNGCMLTNITISVEREECEFCISINTTWCSGYCHTRDLVYKDPIRPNVQKTCTFKEFVYETVNLPGCAKQADSLYSYPVATACHCGSCDTDSTDCTVRGLGPSYCSFNERKE.

An N-terminal signal peptide occupies residues 1–20 (MKTAQFYVLFFCWKAIWCNG). 6 disulfides stabilise this stretch: Cys21-Cys69, Cys35-Cys84, Cys38-Cys122, Cys46-Cys100, Cys50-Cys102, and Cys105-Cys112. N-linked (GlcNAc...) asparagine glycosylation is found at Asn25 and Asn42.

Belongs to the glycoprotein hormones subunit beta family. Heterodimer. The active follitropin is a heterodimer composed of an alpha chain/CGA shared with other hormones and a unique beta chain/FSHB shown here.

It is found in the secreted. Together with the alpha chain CGA constitutes follitropin, the follicle-stimulating hormone, and provides its biological specificity to the hormone heterodimer. Binds FSHR, a G protein-coupled receptor, on target cells to activate downstream signaling pathways. Follitropin is involved in follicle development and spermatogenesis in reproductive organs. This Trichosurus vulpecula (Brush-tailed possum) protein is Follitropin subunit beta (FSHB).